Consider the following 185-residue polypeptide: Sulfopyruvate decarboxylase subunit beta (185 aa).

This sequence belongs to the TPP enzyme family. As to quaternary structure, heterododecamer composed of 6 subunits alpha and 6 subunits beta. Thiamine diphosphate serves as cofactor.

The enzyme catalyses 3-sulfopyruvate + H(+) = sulfoacetaldehyde + CO2. The protein operates within cofactor biosynthesis; coenzyme M biosynthesis; sulfoacetaldehyde from phosphoenolpyruvate and sulfite: step 4/4. Its function is as follows. Involved in the biosynthesis of the coenzyme M (2-mercaptoethanesulfonic acid). Catalyzes the decarboxylation of sulfopyruvate to sulfoacetaldehyde. This is Sulfopyruvate decarboxylase subunit beta from Methanococcus maripaludis (strain DSM 14266 / JCM 13030 / NBRC 101832 / S2 / LL).